The sequence spans 2948 residues: Transforming acidic coiled-coil-containing protein 2 (2948 aa).

A compositionally biased stretch (polar residues) spans 1–30; the sequence is MGNENSTSDNQRTLSAQTPRSAQPPGNSQN. Disordered regions lie at residues 1-304, 314-333, 392-453, 465-785, 825-964, 985-1050, 1062-1154, 1243-1274, 1296-1400, 1427-1463, 1493-1661, 1675-1705, 1741-1878, 1907-2035, and 2052-2460; these read MGNE…TDDL, RSNSGAAPEAEVNAASQESC, AAGG…MPVS, LVGL…PQGE, SSEK…VSPP, CTGQ…QPDS, ALAP…GEAT, AAQRGAEDSGVKAVSSADPRAPGESPCPVGEP, QPGA…EQIA, PGEKAGAGRSAVGKDLTRPLGPEKLLDGPPGVDVTLL, ASDK…GERR, LGNQSTPAPPTGEVADTPLEPGKVAGAAGEA, VLPG…ESPT, HAGL…SSGT, and LEPR…ETPP. Basic and acidic residues predominate over residues 174–184; it reads GRERQPKEEGQ. 3 positions are modified to phosphoserine: Ser197, Ser201, and Ser269. Val325 is modified (phosphothreonine). At Ser493 the chain carries Phosphoserine. Over residues 496–507 the composition is skewed to basic and acidic residues; sequence ERGEHLNTEQSH. Phosphoserine occurs at positions 561, 571, and 575. Basic and acidic residues predominate over residues 604–629; sequence SKRDPEVGKDELSKPSSDAESRDHPS. Residue Ser758 is modified to Phosphoserine. The span at 911 to 926 shows a compositional bias: low complexity; it reads SDTPTSSPTDMVWESS. At Ser962 the chain carries Phosphoserine. Positions 985–996 are enriched in polar residues; it reads CTGQGPNKSQQA. Position 1025 is a phosphoserine (Ser1025). Phosphoserine occurs at positions 1267 and 1313. A compositionally biased stretch (low complexity) spans 1348–1357; the sequence is ATAPGAGAKA. Over residues 1383–1400 the composition is skewed to polar residues; the sequence is DPKQGTSGGVDTSSEQIA. Residue Ser1562 is modified to Phosphoserine. Basic and acidic residues-rich tracts occupy residues 1801 to 1823 and 1834 to 1854; these read DETHDPKLQHLAPEELHTDRESP and PKKDAPRVMDKVTSDETRGAE. A compositionally biased stretch (low complexity) spans 1862–1873; it reads ADDIIQPAAPAD. Residues 1939–1948 are compositionally biased toward basic and acidic residues; that stretch reads PAKDLSRSSD. The segment covering 1963–1976 has biased composition (pro residues); it reads KAPPAPPPPPPEVI. Ser2072 bears the Phosphoserine mark. Residues 2074–2102 are compositionally biased toward polar residues; that stretch reads DSVPISKSTLSRSLSLQASDFDGASSSGN. Low complexity predominate over residues 2114-2124; the sequence is STGSSSASSTL. The segment covering 2125–2141 has biased composition (basic residues); that stretch reads KRTKKPRPPSLKKKQTT. A phosphoserine mark is found at Ser2161 and Ser2226. Thr2246 carries the post-translational modification Phosphothreonine. Ser2256 carries the phosphoserine modification. The segment covering 2265–2275 has biased composition (basic and acidic residues); the sequence is LEFDYSEDKSS. Residues 2288 to 2305 are compositionally biased toward basic residues; the sequence is KIGKKPVAKMPLRRPKMK. The SPAZ domain occupies 2315-2403; the sequence is PASPPRSPAE…SPASFEIPAS (89 aa). A phosphoserine mark is found at Ser2317, Ser2321, Ser2359, Ser2389, Ser2392, Ser2394, and Ser2403. Polar residues predominate over residues 2348 to 2368; the sequence is NPFSSTSKMQESPKLPQQSYN. Residues 2382–2395 show a composition bias toward low complexity; it reads KTSSKTPSSPSKSP. Phosphothreonine is present on residues Thr2430, Thr2451, Thr2455, and Thr2458. 2 positions are modified to phosphoserine: Ser2512 and Ser2534. Residue Thr2553 is modified to Phosphothreonine. Residues 2555–2577 are disordered; that stretch reads QESPVKSSPVRMSESPTPCSGSS. Phosphoserine occurs at positions 2557 and 2569. A compositionally biased stretch (polar residues) spans 2568–2577; the sequence is ESPTPCSGSS. Position 2625 is a phosphothreonine (Thr2625). 2 coiled-coil regions span residues 2675–2703 and 2746–2947; these read AQKLQEELEFAIMRIEALKLARQIALASR and DLDS…KMGK.

The protein belongs to the TACC family. In terms of assembly, interacts with CCDC100/CEP120. Interacts with microtubules. Interacts with YEATS4, GCN5L2 and PCAF. Phosphorylated by TTK; which is required for localization in centrosome. Strongly expressed in heart, skeletal muscle, brain, prostate, thyroid and trachea.

It localises to the cytoplasm. The protein localises to the nucleus. Its subcellular location is the cytoskeleton. It is found in the microtubule organizing center. The protein resides in the centrosome. Plays a role in the microtubule-dependent coupling of the nucleus and the centrosome. Involved in the processes that regulate centrosome-mediated interkinetic nuclear migration (INM) of neural progenitors. May play a role in organizing centrosomal microtubules. May act as a tumor suppressor protein. May represent a tumor progression marker. In Homo sapiens (Human), this protein is Transforming acidic coiled-coil-containing protein 2 (TACC2).